Here is a 133-residue protein sequence, read N- to C-terminus: Rodlin protein RdlB (133 aa).

Positions 1–28 are cleaved as a signal peptide; the sequence is MIKKVVAYAAIAASVMGASAAAAPQAMA. Amyloid-forming stretches follow at residues 45 to 57 and 59 to 70; these read QYFGNSMTTGNMS and QMALIQGSFNKP. A required for amyloid formation region spans residues 45-70; sequence QYFGNSMTTGNMSPQMALIQGSFNKP.

The protein belongs to the rodlin family.

It localises to the secreted. Its subcellular location is the cell wall. It is found in the spore wall. In terms of biological role, forms part of the rodlet layer on the spore surface; despite their high similarity both RdlA and RdlB are required for rodlet formation. Plays a role in cell adhesion to polystyrene plates. Forms amyloid-like fibrils in vitro composed of stacked beta-sheets. This Streptomyces coelicolor (strain ATCC BAA-471 / A3(2) / M145) protein is Rodlin protein RdlB.